A 216-amino-acid chain; its full sequence is Holliday junction branch migration complex subunit RuvA (216 aa).

The domain I stretch occupies residues 1-64 (MISFIKGVLI…EDAQQLYGFK (64 aa)). The interval 65-143 (SKVDKKVFQE…KMANEIYAQT (79 aa)) is domain II. A flexible linker region spans residues 144–163 (SGTTTTSQDSQAQQAPTSVV). Positions 164-216 (LANSIFNESVDALLALGYKQKDAEKMARSAMGDATTAAEVIRKALQGSIKSKG) are domain III.

This sequence belongs to the RuvA family. As to quaternary structure, homotetramer. Forms an RuvA(8)-RuvB(12)-Holliday junction (HJ) complex. HJ DNA is sandwiched between 2 RuvA tetramers; dsDNA enters through RuvA and exits via RuvB. An RuvB hexamer assembles on each DNA strand where it exits the tetramer. Each RuvB hexamer is contacted by two RuvA subunits (via domain III) on 2 adjacent RuvB subunits; this complex drives branch migration. In the full resolvosome a probable DNA-RuvA(4)-RuvB(12)-RuvC(2) complex forms which resolves the HJ.

It localises to the cytoplasm. In terms of biological role, the RuvA-RuvB-RuvC complex processes Holliday junction (HJ) DNA during genetic recombination and DNA repair, while the RuvA-RuvB complex plays an important role in the rescue of blocked DNA replication forks via replication fork reversal (RFR). RuvA specifically binds to HJ cruciform DNA, conferring on it an open structure. The RuvB hexamer acts as an ATP-dependent pump, pulling dsDNA into and through the RuvAB complex. HJ branch migration allows RuvC to scan DNA until it finds its consensus sequence, where it cleaves and resolves the cruciform DNA. This chain is Holliday junction branch migration complex subunit RuvA, found in Francisella tularensis subsp. holarctica (strain FTNF002-00 / FTA).